The chain runs to 501 residues: Zinc finger protein PLAG1 (501 aa).

Residues 1 to 30 (MATVIPGDLSEVRDTQKVPSGKRKRGETKP) are disordered. Positions 22 to 25 (KRKR) match the Nuclear localization signal motif. 7 C2H2-type zinc fingers span residues 34 to 56 (FPCQ…SYSH), 62 to 86 (YKCT…MATH), 92 to 114 (HKCN…LHTH), 121 to 143 (FKCE…LALH), 150 to 172 (LTCK…LKTH), 185 to 207 (HQCE…MVVH), and 213 to 236 (FLCQ…KKSH). Composition is skewed to low complexity over residues 366-380 (SGMP…ASSS) and 455-467 (TQLP…PQDP). Disordered regions lie at residues 366–406 (SGMP…GSVP) and 447–474 (QEEA…IGLG).

Belongs to the krueppel C2H2-type zinc-finger protein family. Expressed in nephroblastoma.

Its subcellular location is the nucleus. In terms of biological role, transcription factor and proto-oncogene whose activation results in up-regulation of target genes, such as IGFII, leading to uncontrolled cell proliferation. The polypeptide is Zinc finger protein PLAG1 (PLAG1) (Gallus gallus (Chicken)).